Consider the following 61-residue polypeptide: Large ribosomal subunit protein uL30 (61 aa).

It belongs to the universal ribosomal protein uL30 family. Part of the 50S ribosomal subunit.

In Bordetella avium (strain 197N), this protein is Large ribosomal subunit protein uL30.